A 348-amino-acid polypeptide reads, in one-letter code: D-alanine--D-alanine ligase (348 aa).

Positions 132 to 334 (KRVLESADIP…YAELIEELVR (203 aa)) constitute an ATP-grasp domain. ATP is bound at residue 162-217 (EAVLSYPVFVKPANMGSSVGISKAESEEELRAAILLALTYDSRILIEQGVLAREIE). Aspartate 288, glutamate 301, and asparagine 303 together coordinate Mg(2+).

This sequence belongs to the D-alanine--D-alanine ligase family. It depends on Mg(2+) as a cofactor. The cofactor is Mn(2+).

It localises to the cytoplasm. It carries out the reaction 2 D-alanine + ATP = D-alanyl-D-alanine + ADP + phosphate + H(+). The protein operates within cell wall biogenesis; peptidoglycan biosynthesis. Its function is as follows. Cell wall formation. The sequence is that of D-alanine--D-alanine ligase from Streptococcus equi subsp. zooepidemicus (strain MGCS10565).